The sequence spans 79 residues: MORN repeat-containing protein 2 (79 aa).

MORN repeat units follow at residues Tyr15–Lys37 and Tyr38–Glu60.

The sequence is that of MORN repeat-containing protein 2 (MORN2) from Bos taurus (Bovine).